The sequence spans 201 residues: Glutathione peroxidase 1 (201 aa).

A Phosphoserine modification is found at Ser32. Sec47 is an active-site residue. Residue Sec47 is a non-standard amino acid, selenocysteine. An N6-acetyllysine; alternate mark is found at Lys86, Lys112, and Lys146. Residues Lys86, Lys112, and Lys146 each carry the N6-succinyllysine; alternate modification. Residues Ser195 and Ser199 each carry the phosphoserine modification.

Belongs to the glutathione peroxidase family. Homotetramer. Interacts with MIEN1. Post-translationally, during periods of oxidative stress, Sec-47 may react with a superoxide radical, irreversibly lose hydroselenide and be converted to dehydroalanine.

The protein resides in the cytoplasm. It carries out the reaction 2 glutathione + H2O2 = glutathione disulfide + 2 H2O. The enzyme catalyses (12S)-hydroperoxy-(5Z,8Z,10E,14Z)-eicosatetraenoate + 2 glutathione = (12S)-hydroxy-(5Z,8Z,10E,14Z)-eicosatetraenoate + glutathione disulfide + H2O. Functionally, protects the hemoglobin in erythrocytes from oxidative breakdown. In platelets, plays a crucial role of glutathione peroxidase in the arachidonic acid metabolism. The polypeptide is Glutathione peroxidase 1 (GPX1) (Hylobates lar (Lar gibbon)).